Consider the following 697-residue polypeptide: Potassium-transporting ATPase ATP-binding subunit (697 aa).

Helical transmembrane passes span 55–75 (PIMFVVEIGFIITFILSFLPS), 79–99 (SIPGWFNITVSLILLFTVLFA), 245–265 (LTLIFLIVVVTLPIFTNYLGF), and 271–291 (VLVALLVCLIPTTIGGLLSAI). Asp324 acts as the 4-aspartylphosphate intermediate in catalysis. ATP contacts are provided by residues Asp361, Glu365, 393 to 400 (FKAETRMS), and Lys412. Mg(2+) contacts are provided by Asp535 and Asp539. Transmembrane regions (helical) follow at residues 605-625 (FAIIPAMFTLAIPQMEALNIM), 633-653 (AILSALIFNAVIIPLLIPLAM), and 677-697 (GGVIVPFIGIKVIDIIVGLFI).

This sequence belongs to the cation transport ATPase (P-type) (TC 3.A.3) family. Type IA subfamily. As to quaternary structure, the system is composed of three essential subunits: KdpA, KdpB and KdpC.

The protein resides in the cell membrane. The catalysed reaction is K(+)(out) + ATP + H2O = K(+)(in) + ADP + phosphate + H(+). Functionally, part of the high-affinity ATP-driven potassium transport (or Kdp) system, which catalyzes the hydrolysis of ATP coupled with the electrogenic transport of potassium into the cytoplasm. This subunit is responsible for energy coupling to the transport system and for the release of the potassium ions to the cytoplasm. The protein is Potassium-transporting ATPase ATP-binding subunit of Bacillus cereus (strain ATCC 14579 / DSM 31 / CCUG 7414 / JCM 2152 / NBRC 15305 / NCIMB 9373 / NCTC 2599 / NRRL B-3711).